The following is a 415-amino-acid chain: Histidine--tRNA ligase (415 aa).

It belongs to the class-II aminoacyl-tRNA synthetase family. In terms of assembly, homodimer.

The protein resides in the cytoplasm. It catalyses the reaction tRNA(His) + L-histidine + ATP = L-histidyl-tRNA(His) + AMP + diphosphate + H(+). The sequence is that of Histidine--tRNA ligase from Clostridium perfringens (strain ATCC 13124 / DSM 756 / JCM 1290 / NCIMB 6125 / NCTC 8237 / Type A).